Consider the following 291-residue polypeptide: Urease accessory protein UreD (291 aa).

It belongs to the UreD family. UreD, UreF and UreG form a complex that acts as a GTP-hydrolysis-dependent molecular chaperone, activating the urease apoprotein by helping to assemble the nickel containing metallocenter of UreC. The UreE protein probably delivers the nickel.

It localises to the cytoplasm. Functionally, required for maturation of urease via the functional incorporation of the urease nickel metallocenter. This Acinetobacter baumannii (strain ATCC 17978 / DSM 105126 / CIP 53.77 / LMG 1025 / NCDC KC755 / 5377) protein is Urease accessory protein UreD.